The chain runs to 514 residues: Glutamyl-tRNA(Gln) amidotransferase subunit B, mitochondrial (514 aa).

This sequence belongs to the GatB/GatE family. GatB subfamily. In terms of assembly, subunit of the heterotrimeric GatCAB amidotransferase (AdT) complex, composed of A, B and C subunits.

It is found in the mitochondrion. It catalyses the reaction L-glutamyl-tRNA(Gln) + L-glutamine + ATP + H2O = L-glutaminyl-tRNA(Gln) + L-glutamate + ADP + phosphate + H(+). Its function is as follows. Allows the formation of correctly charged Gln-tRNA(Gln) through the transamidation of misacylated Glu-tRNA(Gln) in the mitochondria. The reaction takes place in the presence of glutamine and ATP through an activated gamma-phospho-Glu-tRNA(Gln). This chain is Glutamyl-tRNA(Gln) amidotransferase subunit B, mitochondrial, found in Naegleria gruberi (Amoeba).